Consider the following 363-residue polypeptide: 3-isopropylmalate dehydrogenase (363 aa).

Position 79-92 (79-92 (GPKWEHLPPNDQPE)) interacts with NAD(+). Arg100, Arg110, Arg139, and Asp228 together coordinate substrate. Asp228, Asp252, and Asp256 together coordinate Mg(2+). 286-298 (GSAPDIAGKNIAN) is an NAD(+) binding site.

Belongs to the isocitrate and isopropylmalate dehydrogenases family. LeuB type 1 subfamily. In terms of assembly, homodimer. The cofactor is Mg(2+). Mn(2+) serves as cofactor.

It localises to the cytoplasm. It carries out the reaction (2R,3S)-3-isopropylmalate + NAD(+) = 4-methyl-2-oxopentanoate + CO2 + NADH. Its pathway is amino-acid biosynthesis; L-leucine biosynthesis; L-leucine from 3-methyl-2-oxobutanoate: step 3/4. Functionally, catalyzes the oxidation of 3-carboxy-2-hydroxy-4-methylpentanoate (3-isopropylmalate) to 3-carboxy-4-methyl-2-oxopentanoate. The product decarboxylates to 4-methyl-2 oxopentanoate. This is 3-isopropylmalate dehydrogenase from Aliivibrio fischeri (strain ATCC 700601 / ES114) (Vibrio fischeri).